A 293-amino-acid chain; its full sequence is Diaminopimelate epimerase (293 aa).

Substrate contacts are provided by Asn-17, Gln-47, and Asn-67. The Proton donor role is filled by Cys-76. Residues 77-78 (GN), Asn-164, Asn-197, and 215-216 (ER) contribute to the substrate site. The active-site Proton acceptor is the Cys-224. A substrate-binding site is contributed by 225-226 (GS).

Belongs to the diaminopimelate epimerase family. Homodimer.

The protein resides in the cytoplasm. It carries out the reaction (2S,6S)-2,6-diaminopimelate = meso-2,6-diaminopimelate. It participates in amino-acid biosynthesis; L-lysine biosynthesis via DAP pathway; DL-2,6-diaminopimelate from LL-2,6-diaminopimelate: step 1/1. In terms of biological role, catalyzes the stereoinversion of LL-2,6-diaminopimelate (L,L-DAP) to meso-diaminopimelate (meso-DAP), a precursor of L-lysine and an essential component of the bacterial peptidoglycan. This Rhodopseudomonas palustris (strain ATCC BAA-98 / CGA009) protein is Diaminopimelate epimerase.